The sequence spans 219 residues: UPF0502 protein Ppro_2903 (219 aa).

This sequence belongs to the UPF0502 family.

This is UPF0502 protein Ppro_2903 from Pelobacter propionicus (strain DSM 2379 / NBRC 103807 / OttBd1).